We begin with the raw amino-acid sequence, 143 residues long: Actin-depolymerizing factor 5 (143 aa).

Residues 11–143 (GMRVTDECTS…GFDIIQDRAK (133 aa)) enclose the ADF-H domain.

It belongs to the actin-binding proteins ADF family. Expressed exclusively in root tip meristem.

It is found in the cytoplasm. It localises to the cytoskeleton. Functionally, actin-depolymerizing protein. Severs actin filaments (F-actin) and binds to actin monomers. The protein is Actin-depolymerizing factor 5 (ADF5) of Arabidopsis thaliana (Mouse-ear cress).